Reading from the N-terminus, the 372-residue chain is Alpha-parvin (372 aa).

Residues M1 to V11 are compositionally biased toward low complexity. The segment at M1 to K44 is disordered. Residue A2 is modified to N-acetylalanine. 3 positions are modified to phosphoserine: S8, S14, and S19. The interval P21 to K25 is interaction with ARHGAP31. Phosphoserine is present on residues S28 and S62. Calponin-homology (CH) domains are found at residues Q95 to R202 and N262 to R369. A required for interaction with TESK1 and ILK region spans residues G223–E372.

It belongs to the parvin family. As to quaternary structure, component of the heterotrimeric IPP (ILK-PINCH-PARVIN) complex composed of ILK, LIMS1/PINCH and PARVA; the complex binds to F-actin via the C-terminal tail of LIMS1 and the N-terminal region of PARVA, promoting F-actin filament bundling. Interacts with TGFB1I1. Interacts with ARHGAP31. Interacts with the actin cytoskeleton. Interacts (via C-terminus) with TESK1 (via C-terminus); the interaction inhibits TESK1 kinase activity. Interacts with PXN/PAXILLIN (via LD motif 4). As to expression, widely expressed.

It is found in the cell junction. It localises to the focal adhesion. The protein resides in the cell membrane. Its subcellular location is the cytoplasm. The protein localises to the cytoskeleton. It is found in the myofibril. It localises to the sarcomere. The protein resides in the z line. Its function is as follows. Plays a role in sarcomere organization and in smooth muscle cell contraction. Required for normal development of the embryonic cardiovascular system, and for normal septation of the heart outflow tract. Plays a role in sprouting angiogenesis and is required for normal adhesion of vascular smooth muscle cells to endothelial cells during blood vessel development. Plays a role in the reorganization of the actin cytoskeleton, formation of lamellipodia and ciliogenesis. Plays a role in the establishment of cell polarity, cell adhesion, cell spreading, and directed cell migration. Within the IPP (ILK-PINCH-PARVIN) complex, binds to F-actin, promoting F-actin bundling, a process required to generate force for actin cytoskeleton reorganization and subsequent dynamic cell adhesion events such as cell spreading and migration. This Rattus norvegicus (Rat) protein is Alpha-parvin (Parva).